A 1099-amino-acid chain; its full sequence is Transmembrane protein 132D (1099 aa).

A signal peptide spans 1-30; that stretch reads MCPSEMGTLWHHWSPVLISLAALFSKVTEG. Topologically, residues 31-915 are extracellular; that stretch reads RGILESIQRF…LMQASKGLSD (885 aa). Residue Asn-505 is glycosylated (N-linked (GlcNAc...) asparagine). Residues 797 to 858 form a disordered region; it reads FGQNDANPNT…LMEGRGTTTD (62 aa). A compositionally biased stretch (low complexity) spans 835-848; that stretch reads GSQEGQYYGSSSMG. Residues 916–936 form a helical membrane-spanning segment; sequence LEIGMYALLGVFCLAILVFLI. Topologically, residues 937 to 1099 are cytoplasmic; the sequence is NCVTFALKYR…NYMERLHENV (163 aa).

The protein belongs to the TMEM132 family. In terms of assembly, interacts (via C-terminus) with NCKAP. Expressed in mature oligodendrocytes. Detected in the brain, lung, pancreas and testis. Highly expressed in mature neurons of the adult nervous system.

It localises to the membrane. Functionally, regulate neuronals morphology via inhibition of the WAVE regulatory complex (WCR), a complex that controls F-actin cytoskeletal dynamics. This is Transmembrane protein 132D from Homo sapiens (Human).